We begin with the raw amino-acid sequence, 331 residues long: Glucokinase (331 aa).

16–21 contacts ATP; it reads GDIGGT.

This sequence belongs to the bacterial glucokinase family.

The protein localises to the cytoplasm. The catalysed reaction is D-glucose + ATP = D-glucose 6-phosphate + ADP + H(+). The protein is Glucokinase of Pseudomonas aeruginosa (strain LESB58).